Consider the following 159-residue polypeptide: Endoribonuclease YbeY (159 aa).

Positions 125, 129, and 135 each coordinate Zn(2+).

The protein belongs to the endoribonuclease YbeY family. It depends on Zn(2+) as a cofactor.

It is found in the cytoplasm. In terms of biological role, single strand-specific metallo-endoribonuclease involved in late-stage 70S ribosome quality control and in maturation of the 3' terminus of the 16S rRNA. This chain is Endoribonuclease YbeY, found in Ligilactobacillus salivarius (strain UCC118) (Lactobacillus salivarius).